A 557-amino-acid polypeptide reads, in one-letter code: Putative inactive polypeptide N-acetylgalactosaminyltransferase 11 (557 aa).

At 1 to 4 (MKSL) the chain is on the cytoplasmic side. The helical; Signal-anchor for type II membrane protein transmembrane segment at 5–27 (LFGTPCSCAIFILVYCIITLFIW) threads the bilayer. At 28–557 (FLYTDNLSNA…MRDICLSVNH (530 aa)) the chain is on the lumenal side. N-linked (GlcNAc...) asparagine glycosylation is found at N33 and N103. 5 cysteine pairs are disulfide-bonded: C99–C325, C316–C397, C437–C450, C472–C486, and C511–C526. The interval 109 to 215 (TVTVSIVIAI…RGWLPPLLEP (107 aa)) is catalytic subdomain A. A glycan (N-linked (GlcNAc...) asparagine) is linked at N220. The segment at 271–333 (PYPSSQLEGR…PCSRVGIIYK (63 aa)) is catalytic subdomain B. N379 carries N-linked (GlcNAc...) asparagine glycosylation. The Ricin B-type lectin domain occupies 456–557 (EDWTLTSRCQ…MRDICLSVNH (102 aa)).

It belongs to the glycosyltransferase 2 family. GalNAc-T subfamily.

It localises to the golgi apparatus membrane. Its function is as follows. Probable inactive glycosyltransferase. This is Putative inactive polypeptide N-acetylgalactosaminyltransferase 11 from Drosophila melanogaster (Fruit fly).